Reading from the N-terminus, the 342-residue chain is HPr kinase/phosphorylase (342 aa).

Active-site residues include His-153 and Lys-174. 168-175 (GKSGLGKS) lines the ATP pocket. Ser-175 is a binding site for Mg(2+). Asp-192 (proton acceptor; for phosphorylation activity. Proton donor; for dephosphorylation activity) is an active-site residue. The interval 217–226 (MEIRGLGVVD) is important for the catalytic mechanism of both phosphorylation and dephosphorylation. Residue Glu-218 participates in Mg(2+) binding. Arg-259 is a catalytic residue. The tract at residues 280–285 (PIFPGK) is important for the catalytic mechanism of dephosphorylation.

The protein belongs to the HPrK/P family. Homohexamer. It depends on Mg(2+) as a cofactor.

The catalysed reaction is [HPr protein]-L-serine + ATP = [HPr protein]-O-phospho-L-serine + ADP + H(+). It catalyses the reaction [HPr protein]-O-phospho-L-serine + phosphate + H(+) = [HPr protein]-L-serine + diphosphate. Catalyzes the ATP- as well as the pyrophosphate-dependent phosphorylation of a specific serine residue in HPr, a phosphocarrier protein of the phosphoenolpyruvate-dependent sugar phosphotransferase system (PTS). HprK/P also catalyzes the pyrophosphate-producing, inorganic phosphate-dependent dephosphorylation (phosphorolysis) of seryl-phosphorylated HPr (P-Ser-HPr). This Chlorobaculum tepidum (strain ATCC 49652 / DSM 12025 / NBRC 103806 / TLS) (Chlorobium tepidum) protein is HPr kinase/phosphorylase.